We begin with the raw amino-acid sequence, 588 residues long: Cryptochrome-1 (588 aa).

Residues 3 to 132 (VNAVHWFRKG…EVIVRISHTL (130 aa)) enclose the Photolyase/cryptochrome alpha/beta domain. Lysine 11 participates in a covalent cross-link: Glycyl lysine isopeptide (Lys-Gly) (interchain with G-Cter in ubiquitin). An LIR 1 motif is present at residues 50-54 (NRWRF). Residue serine 71 is modified to Phosphoserine; by AMPK. The short motif at 82–87 (DVFPRL) is the LIR 2 element. A Glycyl lysine isopeptide (Lys-Gly) (interchain with G-Cter in ubiquitin) cross-link involves residue lysine 107. The LIR 3 motif lies at 151 to 156 (KRFQTL). A Glycyl lysine isopeptide (Lys-Gly) (interchain with G-Cter in ubiquitin) cross-link involves residue lysine 159. A Phosphoserine; by MAPK modification is found at serine 247. Residue serine 252 coordinates FAD. 2 short sequence motifs (LIR) span residues 255–260 (LRFGCL) and 271–276 (DLYKKV). At serine 280 the chain carries Phosphoserine; by AMPK. The LIR 6 motif lies at 285–290 (SLYGQL). Glutamine 289 is an FAD binding site. Lysine 329 is covalently cross-linked (Glycyl lysine isopeptide (Lys-Gly) (interchain with G-Cter in ubiquitin)). An LIR 7 motif is present at residues 335 to 339 (TGFPW). Residue histidine 355 coordinates FAD. Positions 371–470 (WISWEEGMKV…LIGVNYPKPM (100 aa)) are required for inhibition of CLOCK-BMAL1-mediated transcription. Residues 379 to 384 (KVFEEL) carry the LIR 8 motif. 387–389 (DAD) serves as a coordination point for FAD. 3 short sequence motifs (LIR) span residues 395–400 (GSWMWL), 411–416 (HCYCPV), and 430–435 (RRYLPV). Residues 471–493 (VNHAEASRLNIERMKQIYQQLSR) are interaction with TIMELESS. A Glycyl lysine isopeptide (Lys-Gly) (interchain with G-Cter in ubiquitin) cross-link involves residue lysine 485. 2 short sequence motifs (LIR) span residues 486–491 (QIYQQL) and 492–497 (SRYRGL). The tract at residues 511–588 (GGLMGYAPGE…GPKVQRQSSN (78 aa)) is disordered. Positions 545 to 568 (DSQQTNPLKQGRSSMGTGLSSGKR) are enriched in polar residues. Lysine 567 is covalently cross-linked (Glycyl lysine isopeptide (Lys-Gly) (interchain with G-Cter in ubiquitin)). Serine 570 bears the Phosphoserine mark.

It belongs to the DNA photolyase class-1 family. In terms of assembly, component of the circadian core oscillator, which includes the CRY proteins, CLOCK or NPAS2, BMAL1 or BMAL2, CSNK1D and/or CSNK1E, TIMELESS, and the PER proteins. Interacts directly with TIMELESS. Interacts directly with PER1, PER2 and PER3; interaction with PER2 inhibits its ubiquitination and vice versa. Interacts with FBXL21. Interacts with FBXL3. Interacts with CLOCK-BMAL1 independently of PER2 and DNA. Interacts with HDAC1, HDAC2 and SIN3B. Interacts with nuclear receptors AR, NR1D1, NR3C1/GR, RORA and RORC; the interaction with at least NR3C1/GR is ligand dependent. Interacts with PRKDC. Interacts with the G protein subunit alpha GNAS; the interaction may block GPCR-mediated regulation of cAMP concentrations. Interacts with PRMT5. Interacts with EZH2. Interacts with MYBBP1A, DOCK7, HNRNPU, RPL7A, RPL8 and RPS3. Interacts with PPP5C (via TPR repeats). Interacts with MAP1LC3B. Interacts with CLOCK. Interacts with BMAL1. Interacts weakly with HDAC3; this interaction is enhanced in the presence of FBXL3. Interacts with TRIM28, KCTD5 and DDB1. Interacts with FOXO1. Interacts with DTL and DDB1-CUL4A complex. Interacts with HNF4A. Interacts with PSMD2 in a KDM8-dependent manner. Interacts with KDM8 in a FBXL3-dependent manner. Interacts with PPARG in a ligand-dependent manner. Interacts with PPARD (via domain NR LBD) and NR1I2 (via domain NR LBD) in a ligand-dependent manner. Interacts with PPARA, NR1I3 and VDR. FAD serves as cofactor. The cofactor is (6R)-5,10-methylene-5,6,7,8-tetrahydrofolate. Phosphorylation on Ser-247 by MAPK is important for the inhibition of CLOCK-BMAL1-mediated transcriptional activity. Phosphorylation by CSNK1E requires interaction with PER1 or PER2. Phosphorylation at Ser-71 and Ser-280 by AMPK decreases protein stability. Phosphorylation at Ser-570 exhibits a robust circadian rhythm with a peak at CT8, increases protein stability, prevents SCF(FBXL3)-mediated degradation and is antagonized by interaction with PRKDC. In terms of processing, ubiquitinated by the SCF(FBXL3) and SCF(FBXL21) complexes, regulating the balance between degradation and stabilization. The SCF(FBXL3) complex is mainly nuclear and mediates ubiquitination and subsequent degradation of CRY1. In contrast, cytoplasmic SCF(FBXL21) complex-mediated ubiquitination leads to stabilize CRY1 and counteract the activity of the SCF(FBXL3) complex. The SCF(FBXL3) and SCF(FBXL21) complexes probably mediate ubiquitination at different Lys residues. Ubiquitination at Lys-11 and Lys-107 are specifically ubiquitinated by the SCF(FBXL21) complex but not by the SCF(FBXL3) complex. Ubiquitination may be inhibited by PER2. Deubiquitinated by USP7. Post-translationally, undergoes autophagy-mediated degradation in the liver in a time-dependent manner. Autophagic degradation of CRY1 (an inhibitor of gluconeogenesis) occurs during periods of reduced feeding allowing induction of gluconeogenesis and maintenance of blood glucose levels.

It is found in the cytoplasm. The protein resides in the nucleus. In terms of biological role, transcriptional repressor which forms a core component of the circadian clock. The circadian clock, an internal time-keeping system, regulates various physiological processes through the generation of approximately 24 hour circadian rhythms in gene expression, which are translated into rhythms in metabolism and behavior. It is derived from the Latin roots 'circa' (about) and 'diem' (day) and acts as an important regulator of a wide array of physiological functions including metabolism, sleep, body temperature, blood pressure, endocrine, immune, cardiovascular, and renal function. Consists of two major components: the central clock, residing in the suprachiasmatic nucleus (SCN) of the brain, and the peripheral clocks that are present in nearly every tissue and organ system. Both the central and peripheral clocks can be reset by environmental cues, also known as Zeitgebers (German for 'timegivers'). The predominant Zeitgeber for the central clock is light, which is sensed by retina and signals directly to the SCN. The central clock entrains the peripheral clocks through neuronal and hormonal signals, body temperature and feeding-related cues, aligning all clocks with the external light/dark cycle. Circadian rhythms allow an organism to achieve temporal homeostasis with its environment at the molecular level by regulating gene expression to create a peak of protein expression once every 24 hours to control when a particular physiological process is most active with respect to the solar day. Transcription and translation of core clock components (CLOCK, NPAS2, BMAL1, BMAL2, PER1, PER2, PER3, CRY1 and CRY2) plays a critical role in rhythm generation, whereas delays imposed by post-translational modifications (PTMs) are important for determining the period (tau) of the rhythms (tau refers to the period of a rhythm and is the length, in time, of one complete cycle). A diurnal rhythm is synchronized with the day/night cycle, while the ultradian and infradian rhythms have a period shorter and longer than 24 hours, respectively. Disruptions in the circadian rhythms contribute to the pathology of cardiovascular diseases, cancer, metabolic syndromes and aging. A transcription/translation feedback loop (TTFL) forms the core of the molecular circadian clock mechanism. Transcription factors, CLOCK or NPAS2 and BMAL1 or BMAL2, form the positive limb of the feedback loop, act in the form of a heterodimer and activate the transcription of core clock genes and clock-controlled genes (involved in key metabolic processes), harboring E-box elements (5'-CACGTG-3') within their promoters. The core clock genes: PER1/2/3 and CRY1/2 which are transcriptional repressors form the negative limb of the feedback loop and interact with the CLOCK|NPAS2-BMAL1|BMAL2 heterodimer inhibiting its activity and thereby negatively regulating their own expression. This heterodimer also activates nuclear receptors NR1D1/2 and RORA/B/G, which form a second feedback loop and which activate and repress BMAL1 transcription, respectively. CRY1 and CRY2 have redundant functions but also differential and selective contributions at least in defining the pace of the SCN circadian clock and its circadian transcriptional outputs. More potent transcriptional repressor in cerebellum and liver than CRY2, though more effective in lengthening the period of the SCN oscillator. On its side, CRY2 seems to play a critical role in tuning SCN circadian period by opposing the action of CRY1. With CRY2, is dispensable for circadian rhythm generation but necessary for the development of intercellular networks for rhythm synchrony. Capable of translocating circadian clock core proteins such as PER proteins to the nucleus. Interacts with CLOCK-BMAL1 independently of PER proteins and is found at CLOCK-BMAL1-bound sites, suggesting that CRY may act as a molecular gatekeeper to maintain CLOCK-BMAL1 in a poised and repressed state until the proper time for transcriptional activation. Represses the CLOCK-BMAL1 induced transcription of BHLHE40/DEC1, ATF4, MTA1, KLF10 and NAMPT. May repress circadian target genes expression in collaboration with HDAC1 and HDAC2 through histone deacetylation. Mediates the clock-control activation of ATR and modulates ATR-mediated DNA damage checkpoint. In liver, mediates circadian regulation of cAMP signaling and gluconeogenesis by binding to membrane-coupled G proteins and blocking glucagon-mediated increases in intracellular cAMP concentrations and CREB1 phosphorylation. Inhibits hepatic gluconeogenesis by decreasing nuclear FOXO1 levels that down-regulates gluconeogenic gene expression. Besides its role in the maintenance of the circadian clock, is also involved in the regulation of other processes. Represses glucocorticoid receptor NR3C1/GR-induced transcriptional activity by binding to glucocorticoid response elements (GREs). Plays a key role in glucose and lipid metabolism modulation, in part, through the transcriptional regulation of genes involved in these pathways, such as LEP or ACSL4. Represses PPARD and its target genes in the skeletal muscle and limits exercise capacity. Plays an essential role in the generation of circadian rhythms in the retina. Represses the transcriptional activity of NR1I2. This chain is Cryptochrome-1 (Cry1), found in Rattus norvegicus (Rat).